We begin with the raw amino-acid sequence, 298 residues long: UDP-N-acetylenolpyruvoylglucosamine reductase (298 aa).

The 165-residue stretch at 27–191 (TGGEADVFVM…LDATFSLALE (165 aa)) folds into the FAD-binding PCMH-type domain. The active site involves Arg170. The active-site Proton donor is Ser220. Residue Glu290 is part of the active site.

Belongs to the MurB family. FAD serves as cofactor.

The protein localises to the cytoplasm. The catalysed reaction is UDP-N-acetyl-alpha-D-muramate + NADP(+) = UDP-N-acetyl-3-O-(1-carboxyvinyl)-alpha-D-glucosamine + NADPH + H(+). It participates in cell wall biogenesis; peptidoglycan biosynthesis. In terms of biological role, cell wall formation. The sequence is that of UDP-N-acetylenolpyruvoylglucosamine reductase from Listeria monocytogenes serotype 4a (strain HCC23).